Consider the following 153-residue polypeptide: Aspartate carbamoyltransferase regulatory chain (153 aa).

4 residues coordinate Zn(2+): cysteine 109, cysteine 114, cysteine 135, and cysteine 138.

This sequence belongs to the PyrI family. Contains catalytic and regulatory chains. The cofactor is Zn(2+).

Involved in allosteric regulation of aspartate carbamoyltransferase. The sequence is that of Aspartate carbamoyltransferase regulatory chain from Natronomonas pharaonis (strain ATCC 35678 / DSM 2160 / CIP 103997 / JCM 8858 / NBRC 14720 / NCIMB 2260 / Gabara) (Halobacterium pharaonis).